We begin with the raw amino-acid sequence, 282 residues long: 2-dehydro-3-deoxyphosphooctonate aldolase (282 aa).

Belongs to the KdsA family.

The protein localises to the cytoplasm. It carries out the reaction D-arabinose 5-phosphate + phosphoenolpyruvate + H2O = 3-deoxy-alpha-D-manno-2-octulosonate-8-phosphate + phosphate. The protein operates within carbohydrate biosynthesis; 3-deoxy-D-manno-octulosonate biosynthesis; 3-deoxy-D-manno-octulosonate from D-ribulose 5-phosphate: step 2/3. Its pathway is bacterial outer membrane biogenesis; lipopolysaccharide biosynthesis. The protein is 2-dehydro-3-deoxyphosphooctonate aldolase of Shewanella halifaxensis (strain HAW-EB4).